The chain runs to 511 residues: MNQINKFIKNLYLIIITIILIIVISNDNNGLFINGQSLPDGFCPQPLIYRNSTNRKADIDNGYNFVGETNCLLPCPSPLFPKSQWESYFEMSLIMGSISMFASLFLIITYSPLINKKHTRHTVGILCMSIGIFFVMVSDGRQLWDIESPGEYKKYCPDTGRYARQSDTKCLTTGLFFQFGCVTAIGWWSILAVDLWMTIAKKVQTTKKQLLYYLIGINTVSLILTFGPVVKNQYGFGNAAIGCWMLDLKYQYGFFWIPVGICLSVGSVFIGLIFWEIYKISDAVKKRYLKKHIKPLCLIVLMCLEFLYMFIYYSYITANQPTYNKHVAEYIMCLIINAANVPGSYTCQLKTVSPTAQFLFLIAIRLMGLQGLIFYGLTAATKKVWANSWIYKDLLKLFKLFTTKLYNDSSSEEVENSNYSNNNSNYYSSNGYTTGGSDNGVGSGRSDKFTKSSSNGGAQDNNNNNNNNNNNNNNNNNNNNNNNNNSSSLEISGVESNNSTPRVNSPDNLQP.

An N-terminal signal peptide occupies residues 1 to 25 (MNQINKFIKNLYLIIITIILIIVIS). Over 26-93 (NDNNGLFING…QWESYFEMSL (68 aa)) the chain is Extracellular. N-linked (GlcNAc...) asparagine glycosylation occurs at Asn51. The chain crosses the membrane as a helical span at residues 94 to 114 (IMGSISMFASLFLIITYSPLI). The Cytoplasmic segment spans residues 115-122 (NKKHTRHT). The chain crosses the membrane as a helical span at residues 123–143 (VGILCMSIGIFFVMVSDGRQL). Residues 144 to 172 (WDIESPGEYKKYCPDTGRYARQSDTKCLT) are Extracellular-facing. A helical transmembrane segment spans residues 173–193 (TGLFFQFGCVTAIGWWSILAV). Residues 194–209 (DLWMTIAKKVQTTKKQ) are Cytoplasmic-facing. A helical membrane pass occupies residues 210-230 (LLYYLIGINTVSLILTFGPVV). The Extracellular segment spans residues 231–253 (KNQYGFGNAAIGCWMLDLKYQYG). Residues 254–274 (FFWIPVGICLSVGSVFIGLIF) traverse the membrane as a helical segment. Over 275–295 (WEIYKISDAVKKRYLKKHIKP) the chain is Cytoplasmic. Residues 296-316 (LCLIVLMCLEFLYMFIYYSYI) traverse the membrane as a helical segment. The Extracellular portion of the chain corresponds to 317–357 (TANQPTYNKHVAEYIMCLIINAANVPGSYTCQLKTVSPTAQ). The helical transmembrane segment at 358–378 (FLFLIAIRLMGLQGLIFYGLT) threads the bilayer. At 379-511 (AATKKVWANS…RVNSPDNLQP (133 aa)) the chain is on the cytoplasmic side. The disordered stretch occupies residues 430–511 (NGYTTGGSDN…RVNSPDNLQP (82 aa)). Over residues 433-443 (TTGGSDNGVGS) the composition is skewed to gly residues. Residues 451-460 (KSSSNGGAQD) show a composition bias toward polar residues. Residues 461 to 485 (NNNNNNNNNNNNNNNNNNNNNNNNN) show a composition bias toward low complexity. A compositionally biased stretch (polar residues) spans 486-511 (SSSLEISGVESNNSTPRVNSPDNLQP).

It belongs to the G-protein coupled receptor Fz/Smo family.

The protein localises to the membrane. In Dictyostelium discoideum (Social amoeba), this protein is Frizzled/smoothened-like sans CRD protein C (fscC).